A 172-amino-acid polypeptide reads, in one-letter code: Sec-independent protein translocase protein TatB (172 aa).

The helical transmembrane segment at 1–21 threads the bilayer; that stretch reads MIDLGISKLALIGAVALVVIG. Residues 97–129 form a disordered region; it reads GDPASRQTATQAAEWRPAPAKSRNGRNSWRNKQ.

The protein belongs to the TatB family. As to quaternary structure, the Tat system comprises two distinct complexes: a TatABC complex, containing multiple copies of TatA, TatB and TatC subunits, and a separate TatA complex, containing only TatA subunits. Substrates initially bind to the TatABC complex, which probably triggers association of the separate TatA complex to form the active translocon.

Its subcellular location is the cell inner membrane. Functionally, part of the twin-arginine translocation (Tat) system that transports large folded proteins containing a characteristic twin-arginine motif in their signal peptide across membranes. Together with TatC, TatB is part of a receptor directly interacting with Tat signal peptides. TatB may form an oligomeric binding site that transiently accommodates folded Tat precursor proteins before their translocation. The protein is Sec-independent protein translocase protein TatB of Ralstonia nicotianae (strain ATCC BAA-1114 / GMI1000) (Ralstonia solanacearum).